Here is a 505-residue protein sequence, read N- to C-terminus: MSEQHAQGADAVVDLNNELKTRREKLANLREQGIVFPNDFRRDHTSDQLHAEFDGKENEELEALNIEVAVAGRMMTRRIMGKASFVTLQDVGGRIQLYVARDDLPEGVYNEQFKKWDLGDILGAKGKLFKTKTGELSIHCTELRLLTKALRPLPDKFHGLQDQEARYRQRYLDLISNDESRNTFKVRSQILSGIRQFMVNRGFMEVETPMMQVIPGGAAARPFITHHNALDLDMYLRIAPELYLKRLVVGGFERVFEINRNFRNEGISVRHNPEFTMMELYMAYADYKDLIELTESLFRTLAQDILGKTEVTYGDVTLDFGKPFEKLTMREAIKKYRPETDMADLDNFDSAKAIAESIGIHVEKSWGLGRIVTEIFEEVAEAHLIQPTFITEYPAEVSPLARRNDINPEITDRFEFFIGGREIGNGFSELNDAEDQAQRFLDQVAAKDAGDDEAMFYDEDYVTALEHGLPPTAGLGIGIDRMVMLFTNSHTIRDVILFPAMRPVK.

2 residues coordinate Mg(2+): Glu415 and Glu422.

Belongs to the class-II aminoacyl-tRNA synthetase family. Homodimer. The cofactor is Mg(2+).

Its subcellular location is the cytoplasm. The catalysed reaction is tRNA(Lys) + L-lysine + ATP = L-lysyl-tRNA(Lys) + AMP + diphosphate. The protein is Lysine--tRNA ligase of Shigella boydii serotype 4 (strain Sb227).